The chain runs to 313 residues: Porphobilinogen deaminase (313 aa).

Position 241 is an S-(dipyrrolylmethanemethyl)cysteine (cysteine 241).

Belongs to the HMBS family. As to quaternary structure, monomer. Requires dipyrromethane as cofactor.

The enzyme catalyses 4 porphobilinogen + H2O = hydroxymethylbilane + 4 NH4(+). Its pathway is porphyrin-containing compound metabolism; protoporphyrin-IX biosynthesis; coproporphyrinogen-III from 5-aminolevulinate: step 2/4. It functions in the pathway porphyrin-containing compound metabolism; chlorophyll biosynthesis. Its function is as follows. Tetrapolymerization of the monopyrrole PBG into the hydroxymethylbilane pre-uroporphyrinogen in several discrete steps. This is Porphobilinogen deaminase from Chlorobium limicola (strain DSM 245 / NBRC 103803 / 6330).